Here is a 448-residue protein sequence, read N- to C-terminus: Divalent metal cation transporter MntH (448 aa).

11 consecutive transmembrane segments (helical) span residues 41-61 (LFAF…PGNW), 69-89 (SEFG…AVLL), 117-137 (GFVL…AEVI), 147-167 (FGIP…LVLF), 176-196 (IEVI…AEMV), 215-235 (IVTN…TVMP), 270-290 (FSLT…AAAF), 307-327 (LLNP…ALLA), 363-383 (VLAI…GINE), 384-404 (LLIF…IPLV), and 424-444 (IISW…LFYT).

Belongs to the NRAMP family.

Its subcellular location is the cell membrane. H(+)-stimulated, divalent metal cation uptake system. The protein is Divalent metal cation transporter MntH of Listeria welshimeri serovar 6b (strain ATCC 35897 / DSM 20650 / CCUG 15529 / CIP 8149 / NCTC 11857 / SLCC 5334 / V8).